The primary structure comprises 686 residues: Translation initiation factor IF-2 (686 aa).

A disordered region spans residues K54–D105. Residues R69 to G81 show a composition bias toward basic residues. In terms of domain architecture, tr-type G spans E188 to K357. Residues G197 to T204 are G1. G197–T204 contributes to the GTP binding site. Residues G222–H226 form a G2 region. The segment at D243 to G246 is G3. GTP contacts are provided by residues D243–H247 and N297–D300. The G4 stretch occupies residues N297 to D300. Residues S333–I335 are G5.

The protein belongs to the TRAFAC class translation factor GTPase superfamily. Classic translation factor GTPase family. IF-2 subfamily.

The protein localises to the cytoplasm. In terms of biological role, one of the essential components for the initiation of protein synthesis. Protects formylmethionyl-tRNA from spontaneous hydrolysis and promotes its binding to the 30S ribosomal subunits. Also involved in the hydrolysis of GTP during the formation of the 70S ribosomal complex. This Bacillus cereus (strain AH187) protein is Translation initiation factor IF-2.